The following is a 423-amino-acid chain: MSIQIPRGTQDILPGSVELWQYIEGQAREICRRYNYKEIRTPIFEHTELFLRGVGDTTDIVQKEMYTFQDRGDRSLTLRPEGTAPVVRSYVENKMFGDATQPTKLYYIGQMFRYERPQAGRYRQFVQFGIEAIGSNDPAIDAEVIALAVEFYRGMGLKNIKVVLNSLGDPASRQAHREALIAHFKPRIGEFCSDCQSRLEKNPLRILDCKRDRDHELMNTAPSITDYLNEESTAYYEKVQELLTMMGVPFEKDPNLVRGLDYYQHTVFEIMSEAEGFGAITTLSGGGRYNGLVQEIGGPEMPGIGFAMSIERLIMALKAENIELPIENTIDCYVVALGDKAKDHAAKVAFDLRKSGLSVEKDYLNRKMKAQFKSADRLNAKYVAVLGEDELDKGVINLKDMATGEQEEVALDVFASYIAEKLI.

The protein belongs to the class-II aminoacyl-tRNA synthetase family. Homodimer.

The protein resides in the cytoplasm. The enzyme catalyses tRNA(His) + L-histidine + ATP = L-histidyl-tRNA(His) + AMP + diphosphate + H(+). The chain is Histidine--tRNA ligase from Bacillus cytotoxicus (strain DSM 22905 / CIP 110041 / 391-98 / NVH 391-98).